We begin with the raw amino-acid sequence, 269 residues long: Indole-3-glycerol phosphate synthase (269 aa).

Belongs to the TrpC family.

The enzyme catalyses 1-(2-carboxyphenylamino)-1-deoxy-D-ribulose 5-phosphate + H(+) = (1S,2R)-1-C-(indol-3-yl)glycerol 3-phosphate + CO2 + H2O. It participates in amino-acid biosynthesis; L-tryptophan biosynthesis; L-tryptophan from chorismate: step 4/5. This is Indole-3-glycerol phosphate synthase from Streptomyces griseus subsp. griseus (strain JCM 4626 / CBS 651.72 / NBRC 13350 / KCC S-0626 / ISP 5235).